The sequence spans 292 residues: Cytidine deaminase (292 aa).

2 consecutive CMP/dCMP-type deaminase domains span residues 47-167 and 186-292; these read TPLK…FGPK and DHQD…YYSL. A substrate-binding site is contributed by 88 to 90; sequence NQE. Position 101 (H101) interacts with Zn(2+). E103 serves as the catalytic Proton donor. Zn(2+) is bound by residues C128 and C131.

The protein belongs to the cytidine and deoxycytidylate deaminase family. As to quaternary structure, homodimer. It depends on Zn(2+) as a cofactor.

The enzyme catalyses cytidine + H2O + H(+) = uridine + NH4(+). It catalyses the reaction 2'-deoxycytidine + H2O + H(+) = 2'-deoxyuridine + NH4(+). This enzyme scavenges exogenous and endogenous cytidine and 2'-deoxycytidine for UMP synthesis. The chain is Cytidine deaminase from Haemophilus influenzae (strain 86-028NP).